Here is a 529-residue protein sequence, read N- to C-terminus: Tyrosinase (529 aa).

Positions 1–18 (MLLAVLYCLLWSFQTSAG) are cleaved as a signal peptide. Over 19 to 476 (HFPRACVSSK…YLEQASRIWS (458 aa)) the chain is Lumenal, melanosome. 3 N-linked (GlcNAc...) asparagine glycosylation sites follow: Asn-86, Asn-111, and Asn-161. The Cu cation site is built by His-180, His-202, and His-211. Residue Asn-230 is glycosylated (N-linked (GlcNAc...) asparagine). The disordered stretch occupies residues 287–313 (SLCNGTPEGPLRRNPGNHDKSRTPRLP). N-linked (GlcNAc...) asparagine glycosylation is present at Asn-337. Cu cation-binding residues include His-363 and His-367. N-linked (GlcNAc...) asparagine glycosylation occurs at Asn-371. His-390 contacts Cu cation. A helical membrane pass occupies residues 477–497 (WLLGAAMVGAVLTALLAGLVS). The Cytoplasmic segment spans residues 498-529 (LLCRHKRKQLPEEKQPLLMEKEDYHSLYQSHL).

It belongs to the tyrosinase family. Forms an OPN3-dependent complex with DCT in response to blue light in melanocytes. It depends on Cu(2+) as a cofactor. Glycosylated.

It localises to the melanosome membrane. Its subcellular location is the melanosome. The enzyme catalyses 2 L-dopa + O2 = 2 L-dopaquinone + 2 H2O. It carries out the reaction L-tyrosine + O2 = L-dopaquinone + H2O. The catalysed reaction is 2 5,6-dihydroxyindole-2-carboxylate + O2 = 2 indole-5,6-quinone-2-carboxylate + 2 H2O. In terms of biological role, this is a copper-containing oxidase that functions in the formation of pigments such as melanins and other polyphenolic compounds. Catalyzes the initial and rate limiting step in the cascade of reactions leading to melanin production from tyrosine. In addition to hydroxylating tyrosine to DOPA (3,4-dihydroxyphenylalanine), also catalyzes the oxidation of DOPA to DOPA-quinone, and possibly the oxidation of DHI (5,6-dihydroxyindole) to indole-5,6 quinone. This chain is Tyrosinase, found in Homo sapiens (Human).